A 392-amino-acid chain; its full sequence is MALQPAAGARDLNPQQVELNQKLSQRLAEVYRLWGYDEVSPPRVERLETLKAGGAIASQDIVRLVADEPLGLRPEMTASIARAACTRLKQRPRPLRLWAAGTIFESRTADEGSLCIEENLQSGVELFGVEPINAEMELLSLLFSAVETLELSKRHQPRLLVGHTALMDLIMLPFQNDLREKIRTALIHYDRLALESLQLPNDQFERLLHHLECRGEPLDVLERLSGLFGTQQALNNLQRLFEQMSPLAADQGIDLQLDPTFQPHFELYTGLVFQLVCQSDAAPVVIARGGRYDNLVARCGAKGLQAAGVGFSFAIDDIRELLTKEIKASDAVETTLVAYGEQATLEHALKRQRHWHKQGQRAVVELEACRDREDAFSRLSDRGCSTLDWLDH.

This sequence belongs to the class-II aminoacyl-tRNA synthetase family. HisZ subfamily. As to quaternary structure, heteromultimer composed of HisG and HisZ subunits.

It is found in the cytoplasm. Its pathway is amino-acid biosynthesis; L-histidine biosynthesis; L-histidine from 5-phospho-alpha-D-ribose 1-diphosphate: step 1/9. Its function is as follows. Required for the first step of histidine biosynthesis. May allow the feedback regulation of ATP phosphoribosyltransferase activity by histidine. This Prochlorococcus marinus (strain MIT 9313) protein is ATP phosphoribosyltransferase regulatory subunit.